Consider the following 368-residue polypeptide: Phospho-N-acetylmuramoyl-pentapeptide-transferase (368 aa).

9 helical membrane-spanning segments follow: residues 50–70 (LLAL…VVPL), 95–115 (PTMG…ILAG), 117–137 (SPLV…GWLD), 156–176 (LCLQ…QQGW), 183–203 (ITLP…LAVF), 218–238 (LDGL…LWLA), 242–262 (PAIA…LLHN), 284–304 (AIAI…LFVL), and 347–367 (TQVV…CWLL).

It belongs to the glycosyltransferase 4 family. MraY subfamily. Requires Mg(2+) as cofactor.

It is found in the cell inner membrane. The catalysed reaction is UDP-N-acetyl-alpha-D-muramoyl-L-alanyl-gamma-D-glutamyl-meso-2,6-diaminopimeloyl-D-alanyl-D-alanine + di-trans,octa-cis-undecaprenyl phosphate = di-trans,octa-cis-undecaprenyl diphospho-N-acetyl-alpha-D-muramoyl-L-alanyl-D-glutamyl-meso-2,6-diaminopimeloyl-D-alanyl-D-alanine + UMP. It functions in the pathway cell wall biogenesis; peptidoglycan biosynthesis. Catalyzes the initial step of the lipid cycle reactions in the biosynthesis of the cell wall peptidoglycan: transfers peptidoglycan precursor phospho-MurNAc-pentapeptide from UDP-MurNAc-pentapeptide onto the lipid carrier undecaprenyl phosphate, yielding undecaprenyl-pyrophosphoryl-MurNAc-pentapeptide, known as lipid I. In Synechococcus sp. (strain ATCC 27144 / PCC 6301 / SAUG 1402/1) (Anacystis nidulans), this protein is Phospho-N-acetylmuramoyl-pentapeptide-transferase.